The following is a 314-amino-acid chain: Homoserine O-acetyltransferase (314 aa).

The active-site Acyl-thioester intermediate is cysteine 142. 2 residues coordinate substrate: lysine 163 and serine 192. The active-site Proton acceptor is histidine 235. Residue glutamate 237 is part of the active site. Arginine 249 serves as a coordination point for substrate.

This sequence belongs to the MetA family.

It is found in the cytoplasm. It carries out the reaction L-homoserine + acetyl-CoA = O-acetyl-L-homoserine + CoA. The protein operates within amino-acid biosynthesis; L-methionine biosynthesis via de novo pathway; O-acetyl-L-homoserine from L-homoserine: step 1/1. Its function is as follows. Transfers an acetyl group from acetyl-CoA to L-homoserine, forming acetyl-L-homoserine. The protein is Homoserine O-acetyltransferase of Streptococcus pneumoniae serotype 19F (strain G54).